Here is a 251-residue protein sequence, read N- to C-terminus: NADPH-dependent oxidoreductase (251 aa).

Belongs to the flavin oxidoreductase frp family. The cofactor is FMN.

Functionally, reduces FMN, organic nitro compounds and disulfide DTNB. Involved in maintenance of the cellular redox state and the disulfide stress response. The chain is NADPH-dependent oxidoreductase (nfrA) from Staphylococcus aureus (strain bovine RF122 / ET3-1).